Consider the following 380-residue polypeptide: Calreticulin-3 (380 aa).

The N-terminal stretch at 1–19 (MVSARALLWAICVLRVALA) is a signal peptide. Residues 20–197 (TVYFQEEFLD…GQSIESGSIE (178 aa)) form an N-domain region. Asn42 is a glycosylation site (N-linked (GlcNAc...) asparagine). 4 residues coordinate an alpha-D-glucoside: Tyr109, Lys111, Tyr128, and Asp135. A disulfide bridge links Cys137 with Cys163. 7 consecutive repeat copies span residues 191–202 (IESGSIEYDWNL), 209–220 (EKTSLDSRDWDQ), 222–231 (EGSKVQDWEK), 235–246 (DAGASKPSDWNS), 250–256 (GDWLQKP), 260–268 (DGLKAEGID), and 270–280 (DVWLHQKMRPA). A 4 X approximate repeats region spans residues 191 to 246 (IESGSIEYDWNLTSLRKTEKTSLDSRDWDQVEGSKVQDWEKHFLDAGASKPSDWNS). The tract at residues 198–291 (YDWNLTSLRK…YLTQYDLSEF (94 aa)) is P-domain. The N-linked (GlcNAc...) asparagine glycan is linked to Asn201. The interval 250-280 (GDWLQKPPYEDGLKAEGIDKDVWLHQKMRPA) is 3 X approximate repeats. The C-domain stretch occupies residues 292–380 (ENIGAIGLEL…FSRFHRQGEL (89 aa)). Glu300 serves as a coordination point for an alpha-D-glucoside. The short motif at 377–380 (QGEL) is the Prevents secretion from ER element.

It belongs to the calreticulin family. In terms of assembly, component of an EIF2 complex at least composed of CELF1/CUGBP1, CALR, CALR3, EIF2S1, EIF2S2, HSP90B1 and HSPA5. Testis specific, absent in mature sperm.

It is found in the endoplasmic reticulum lumen. Its function is as follows. CALR3 capacity for calcium-binding may be absent or much lower than that of CALR. During spermatogenesis, may act as a lectin-independent chaperone for specific client proteins such as ADAM3. Required for sperm fertility. The sequence is that of Calreticulin-3 (Calr3) from Mus musculus (Mouse).